Consider the following 359-residue polypeptide: Phospho-N-acetylmuramoyl-pentapeptide-transferase (359 aa).

10 helical membrane-spanning segments follow: residues Ile27–Trp47, Thr73–Leu93, Thr94–Val114, Leu134–Tyr154, Phe166–Ser186, Gly197–Ala217, Gly233–Trp253, Leu261–Leu281, Leu286–Val306, and Lys336–Leu356.

Belongs to the glycosyltransferase 4 family. MraY subfamily. The cofactor is Mg(2+).

Its subcellular location is the cell inner membrane. The enzyme catalyses UDP-N-acetyl-alpha-D-muramoyl-L-alanyl-gamma-D-glutamyl-meso-2,6-diaminopimeloyl-D-alanyl-D-alanine + di-trans,octa-cis-undecaprenyl phosphate = di-trans,octa-cis-undecaprenyl diphospho-N-acetyl-alpha-D-muramoyl-L-alanyl-D-glutamyl-meso-2,6-diaminopimeloyl-D-alanyl-D-alanine + UMP. It participates in cell wall biogenesis; peptidoglycan biosynthesis. Functionally, catalyzes the initial step of the lipid cycle reactions in the biosynthesis of the cell wall peptidoglycan: transfers peptidoglycan precursor phospho-MurNAc-pentapeptide from UDP-MurNAc-pentapeptide onto the lipid carrier undecaprenyl phosphate, yielding undecaprenyl-pyrophosphoryl-MurNAc-pentapeptide, known as lipid I. This is Phospho-N-acetylmuramoyl-pentapeptide-transferase from Maridesulfovibrio salexigens (strain ATCC 14822 / DSM 2638 / NCIMB 8403 / VKM B-1763) (Desulfovibrio salexigens).